Here is a 553-residue protein sequence, read N- to C-terminus: Ribonuclease J 2 (553 aa).

The Zn(2+) site is built by His-69, His-71, His-138, and Asp-160. Substrate is bound at residue 361–365; sequence RVSGH.

It belongs to the metallo-beta-lactamase superfamily. RNA-metabolizing metallo-beta-lactamase-like family. Bacterial RNase J subfamily. As to quaternary structure, homodimer, may be a subunit of the RNA degradosome. Zn(2+) serves as cofactor.

Its subcellular location is the cytoplasm. An RNase that has 5'-3' exonuclease and possibly endonuclease activity. Involved in maturation of rRNA and in some organisms also mRNA maturation and/or decay. Has an overlapping but not completely redundant role with RNase J1 in the decay of mRNA. The sequence is that of Ribonuclease J 2 from Streptococcus pyogenes serotype M3 (strain ATCC BAA-595 / MGAS315).